The following is a 504-amino-acid chain: Cobyric acid synthase (504 aa).

Residues 251 to 448 (DITIAIVQLP…LHGLFDSDAF (198 aa)) enclose the GATase cobBQ-type domain. Cys332 serves as the catalytic Nucleophile. His440 is an active-site residue.

This sequence belongs to the CobB/CobQ family. CobQ subfamily.

It functions in the pathway cofactor biosynthesis; adenosylcobalamin biosynthesis. In terms of biological role, catalyzes amidations at positions B, D, E, and G on adenosylcobyrinic A,C-diamide. NH(2) groups are provided by glutamine, and one molecule of ATP is hydrogenolyzed for each amidation. This Salmonella gallinarum (strain 287/91 / NCTC 13346) protein is Cobyric acid synthase.